Here is a 500-residue protein sequence, read N- to C-terminus: Lysine--tRNA ligase (500 aa).

Residues E410 and E417 each coordinate Mg(2+).

This sequence belongs to the class-II aminoacyl-tRNA synthetase family. Homodimer. The cofactor is Mg(2+).

It is found in the cytoplasm. It catalyses the reaction tRNA(Lys) + L-lysine + ATP = L-lysyl-tRNA(Lys) + AMP + diphosphate. This chain is Lysine--tRNA ligase, found in Shewanella sediminis (strain HAW-EB3).